Here is a 237-residue protein sequence, read N- to C-terminus: Uridylate kinase (237 aa).

11–14 (KLSG) provides a ligand contact to ATP. Glycine 52 provides a ligand contact to UMP. Residues glycine 53 and arginine 57 each contribute to the ATP site. UMP is bound by residues aspartate 72 and 134 to 141 (TGYSYFTT). The ATP site is built by asparagine 162, tyrosine 168, and aspartate 171.

It belongs to the UMP kinase family. Homohexamer.

The protein localises to the cytoplasm. The enzyme catalyses UMP + ATP = UDP + ADP. It participates in pyrimidine metabolism; CTP biosynthesis via de novo pathway; UDP from UMP (UMPK route): step 1/1. Inhibited by UTP. In terms of biological role, catalyzes the reversible phosphorylation of UMP to UDP. The protein is Uridylate kinase of Mycoplasma capricolum subsp. capricolum (strain California kid / ATCC 27343 / NCTC 10154).